The primary structure comprises 144 residues: Deoxyuridine 5'-triphosphate nucleotidohydrolase (144 aa).

Residues 63–65, Asn-76, and 80–82 each bind substrate; these read RSG and TID.

It belongs to the dUTPase family. Requires Mg(2+) as cofactor.

The enzyme catalyses dUTP + H2O = dUMP + diphosphate + H(+). Its pathway is pyrimidine metabolism; dUMP biosynthesis; dUMP from dCTP (dUTP route): step 2/2. Its function is as follows. This enzyme is involved in nucleotide metabolism: it produces dUMP, the immediate precursor of thymidine nucleotides and it decreases the intracellular concentration of dUTP so that uracil cannot be incorporated into DNA. In Alkaliphilus metalliredigens (strain QYMF), this protein is Deoxyuridine 5'-triphosphate nucleotidohydrolase.